A 608-amino-acid chain; its full sequence is UvrABC system protein C (608 aa).

A GIY-YIG domain is found at 13–91 (HDPGVYRMFD…IKTFQPRYNV (79 aa)). The UVR domain occupies 201-236 (QQVLDHLIGKMERASRALNFEEAARYRDQIQAVRSV).

The protein belongs to the UvrC family. Interacts with UvrB in an incision complex.

Its subcellular location is the cytoplasm. In terms of biological role, the UvrABC repair system catalyzes the recognition and processing of DNA lesions. UvrC both incises the 5' and 3' sides of the lesion. The N-terminal half is responsible for the 3' incision and the C-terminal half is responsible for the 5' incision. The chain is UvrABC system protein C from Mannheimia succiniciproducens (strain KCTC 0769BP / MBEL55E).